The chain runs to 364 residues: DNA replication and repair protein RecF (364 aa).

30-37 (GENGSGKT) serves as a coordination point for ATP.

It belongs to the RecF family.

Its subcellular location is the cytoplasm. Functionally, the RecF protein is involved in DNA metabolism; it is required for DNA replication and normal SOS inducibility. RecF binds preferentially to single-stranded, linear DNA. It also seems to bind ATP. The protein is DNA replication and repair protein RecF of Xylella fastidiosa (strain M12).